Consider the following 334-residue polypeptide: Gap junction alpha-2 protein (334 aa).

Residues 1–12 (MAGWELLKLLLD) are Cytoplasmic-facing. The chain crosses the membrane as a helical span at residues 13 to 35 (DVQEHSTLIGKVWLTVLFIFRIF). At 36 to 75 (ILSVAGESVWTDEQSDFICNTQQPGCTNVCYDQAFPISHV) the chain is on the extracellular side. Residues 76–98 (RYWVLQFLFVSTPTLIYLGHMVY) traverse the membrane as a helical segment. Topologically, residues 99 to 153 (LSKKEEKERQKENESRILVANEAQTEVHSSATKKIRIQGPLMCTYTTSVVFKSIF) are cytoplasmic. The chain crosses the membrane as a helical span at residues 154-176 (EAGFLLGQWYIYGFVMSPIFVCE). Over 177 to 207 (RIPCKHKVECFVSRPMEKTIFIIFMLVVSLI) the chain is Extracellular. The helical transmembrane segment at 208-230 (SLLLNLMELIHLSFKCFQHGIKE) threads the bilayer. At 231–334 (GATCSPTGIP…HQTSSKQQYV (104 aa)) the chain is on the cytoplasmic side.

The protein belongs to the connexin family. Alpha-type (group II) subfamily. As to quaternary structure, a connexon is composed of a hexamer of connexins. As to expression, resides primarily in the ovary, oocytes and early embryos.

Its subcellular location is the cell membrane. The protein resides in the cell junction. It localises to the gap junction. In terms of biological role, one gap junction consists of a cluster of closely packed pairs of transmembrane channels, the connexons, through which materials of low MW diffuse from one cell to a neighboring cell. This is Gap junction alpha-2 protein (gja2) from Xenopus laevis (African clawed frog).